The following is a 254-amino-acid chain: Dihydroorotate dehydrogenase B (NAD(+)), electron transfer subunit (254 aa).

Positions 1–99 (MLQTEMKVIQ…LGPLGKGFDI (99 aa)) constitute an FAD-binding FR-type domain. FAD contacts are provided by residues 50 to 53 (RPIS), 67 to 69 (LYR), and 74 to 75 (GT). Residues Cys218, Cys223, Cys226, and Cys241 each contribute to the [2Fe-2S] cluster site.

This sequence belongs to the PyrK family. Heterotetramer of 2 PyrK and 2 PyrD type B subunits. [2Fe-2S] cluster is required as a cofactor. It depends on FAD as a cofactor.

It participates in pyrimidine metabolism; UMP biosynthesis via de novo pathway; orotate from (S)-dihydroorotate (NAD(+) route): step 1/1. Functionally, responsible for channeling the electrons from the oxidation of dihydroorotate from the FMN redox center in the PyrD type B subunit to the ultimate electron acceptor NAD(+). The sequence is that of Dihydroorotate dehydrogenase B (NAD(+)), electron transfer subunit from Listeria monocytogenes serotype 4a (strain HCC23).